Here is a 106-residue protein sequence, read N- to C-terminus: Putative membrane protein insertion efficiency factor (106 aa).

Belongs to the UPF0161 family.

The protein resides in the cell inner membrane. In terms of biological role, could be involved in insertion of integral membrane proteins into the membrane. The protein is Putative membrane protein insertion efficiency factor of Methylacidiphilum infernorum (isolate V4) (Methylokorus infernorum (strain V4)).